We begin with the raw amino-acid sequence, 543 residues long: Chaperonin GroEL 1 (543 aa).

ATP is bound by residues Thr-29–Pro-32, Asp-86–Thr-90, Gly-413, Asn-479–Ala-481, and Asp-495.

Belongs to the chaperonin (HSP60) family. In terms of assembly, forms a cylinder of 14 subunits composed of two heptameric rings stacked back-to-back. Interacts with the co-chaperonin GroES.

The protein localises to the cytoplasm. The enzyme catalyses ATP + H2O + a folded polypeptide = ADP + phosphate + an unfolded polypeptide.. Its function is as follows. Together with its co-chaperonin GroES, plays an essential role in assisting protein folding. The GroEL-GroES system forms a nano-cage that allows encapsulation of the non-native substrate proteins and provides a physical environment optimized to promote and accelerate protein folding. This is Chaperonin GroEL 1 from Prochlorococcus marinus (strain NATL2A).